A 527-amino-acid polypeptide reads, in one-letter code: NAD(P)H-quinone oxidoreductase chain 4 1 (527 aa).

14 consecutive transmembrane segments (helical) span residues 5-25, 35-55, 90-110, 112-132, 136-156, 168-188, 211-231, 242-262, 274-294, 310-330, 331-351, 386-406, 416-436, and 463-483; these read FPWL…LPII, WYSL…FCTG, LIIL…PVSF, PKLF…VFAV, LLFF…LSIW, FILY…TMAF, LLLY…FPLH, TAPA…YALL, AVFA…AALT, ISHM…GLSG, AVLQ…LVGA, LALP…GFAT, VLVI…LLSM, and VFII…PKIV.

The protein belongs to the complex I subunit 4 family.

The protein localises to the cellular thylakoid membrane. It carries out the reaction a plastoquinone + NADH + (n+1) H(+)(in) = a plastoquinol + NAD(+) + n H(+)(out). The enzyme catalyses a plastoquinone + NADPH + (n+1) H(+)(in) = a plastoquinol + NADP(+) + n H(+)(out). In terms of biological role, NDH-1 shuttles electrons from NAD(P)H, via FMN and iron-sulfur (Fe-S) centers, to quinones in the respiratory chain. The immediate electron acceptor for the enzyme in this species is believed to be plastoquinone. Couples the redox reaction to proton translocation (for every two electrons transferred, four hydrogen ions are translocated across the cytoplasmic membrane), and thus conserves the redox energy in a proton gradient. This chain is NAD(P)H-quinone oxidoreductase chain 4 1, found in Trichodesmium erythraeum (strain IMS101).